Here is a 101-residue protein sequence, read N- to C-terminus: Small ribosomal subunit protein bS18c (101 aa).

It belongs to the bacterial ribosomal protein bS18 family. In terms of assembly, part of the 30S ribosomal subunit.

It is found in the plastid. The protein resides in the chloroplast. This is Small ribosomal subunit protein bS18c from Oenothera biennis (German evening primrose).